Reading from the N-terminus, the 366-residue chain is Protein BIG GRAIN 1-like B (366 aa).

2 disordered regions span residues 42-73 (DSST…DFNR) and 129-148 (FERS…EHGS). Residues 56-73 (QNREDTRVSANRRDDFNR) are compositionally biased toward basic and acidic residues.

Belongs to the BIG GRAIN 1 (BG1) plant protein family.

It localises to the cell membrane. Functionally, involved in auxin transport. Regulator of the auxin signaling pathway. In Arabidopsis thaliana (Mouse-ear cress), this protein is Protein BIG GRAIN 1-like B.